A 125-amino-acid polypeptide reads, in one-letter code: Large ribosomal subunit protein bL12 (125 aa).

It belongs to the bacterial ribosomal protein bL12 family. In terms of assembly, homodimer. Part of the ribosomal stalk of the 50S ribosomal subunit. Forms a multimeric L10(L12)X complex, where L10 forms an elongated spine to which 2 to 4 L12 dimers bind in a sequential fashion. Binds GTP-bound translation factors.

Its function is as follows. Forms part of the ribosomal stalk which helps the ribosome interact with GTP-bound translation factors. Is thus essential for accurate translation. This is Large ribosomal subunit protein bL12 from Francisella tularensis subsp. novicida (strain U112).